Consider the following 87-residue polypeptide: Large ribosomal subunit protein bL31B (87 aa).

It belongs to the bacterial ribosomal protein bL31 family. Type B subfamily. In terms of assembly, part of the 50S ribosomal subunit.

This is Large ribosomal subunit protein bL31B from Escherichia coli O9:H4 (strain HS).